Reading from the N-terminus, the 86-residue chain is Large ribosomal subunit protein bL31 (86 aa).

Positions 64 to 86 are disordered; that stretch reads KYGMGSANSSESKDQKEEKDSKK. Positions 74–86 are enriched in basic and acidic residues; that stretch reads ESKDQKEEKDSKK.

The protein belongs to the bacterial ribosomal protein bL31 family. Type A subfamily. Part of the 50S ribosomal subunit.

Binds the 23S rRNA. The sequence is that of Large ribosomal subunit protein bL31 from Prochlorococcus marinus (strain MIT 9301).